We begin with the raw amino-acid sequence, 363 residues long: tRNA dimethylallyltransferase (363 aa).

65–72 (GPTASGKS) provides a ligand contact to ATP. 67 to 72 (TASGKS) is a substrate binding site. Interaction with substrate tRNA stretches follow at residues 90–93 (DSMQ) and 214–218 (QRLIR).

This sequence belongs to the IPP transferase family. In terms of assembly, monomer. Mg(2+) serves as cofactor.

The enzyme catalyses adenosine(37) in tRNA + dimethylallyl diphosphate = N(6)-dimethylallyladenosine(37) in tRNA + diphosphate. In terms of biological role, catalyzes the transfer of a dimethylallyl group onto the adenine at position 37 in tRNAs that read codons beginning with uridine, leading to the formation of N6-(dimethylallyl)adenosine (i(6)A). This Rickettsia massiliae (strain Mtu5) protein is tRNA dimethylallyltransferase.